Here is a 180-residue protein sequence, read N- to C-terminus: MAEDDMCSLFFKLKVEDVTCSDDPEKHMKNASNERKPLIEPVENQLMDIDDEGGSVDHGLLYLYVDCRTMMCCFHRGSLPYNWMQGALLTNLPPYQHDVTLDEVNRGLKQALGFFGYADPMRTPYFTAFSFPGRVIKLNEQMELTSTKGKCLKFDLYASTHLRFKPDELVRHGECKFAIG.

In terms of biological role, hydrolyzes cytokinin glucosides thus liberating free cytokinins. This chain is Cytokinin-beta-glucosidase 2 (ROLC2), found in Linaria vulgaris (Toadflax).